The following is a 363-amino-acid chain: Protein-glutamate methylesterase/protein-glutamine glutaminase 2 (363 aa).

The 118-residue stretch at R6 to H123 folds into the Response regulatory domain. D57 carries the post-translational modification 4-aspartylphosphate. In terms of domain architecture, CheB-type methylesterase spans A172 to R363. Active-site residues include S184, H210, and D306.

Belongs to the CheB family. Post-translationally, phosphorylated by CheA. Phosphorylation of the N-terminal regulatory domain activates the methylesterase activity.

Its subcellular location is the cytoplasm. The catalysed reaction is [protein]-L-glutamate 5-O-methyl ester + H2O = L-glutamyl-[protein] + methanol + H(+). It carries out the reaction L-glutaminyl-[protein] + H2O = L-glutamyl-[protein] + NH4(+). Involved in chemotaxis. Part of a chemotaxis signal transduction system that modulates chemotaxis in response to various stimuli. Catalyzes the demethylation of specific methylglutamate residues introduced into the chemoreceptors (methyl-accepting chemotaxis proteins or MCP) by CheR. Also mediates the irreversible deamidation of specific glutamine residues to glutamic acid. This chain is Protein-glutamate methylesterase/protein-glutamine glutaminase 2, found in Rhodospirillum rubrum (strain ATCC 11170 / ATH 1.1.1 / DSM 467 / LMG 4362 / NCIMB 8255 / S1).